A 281-amino-acid polypeptide reads, in one-letter code: uncharacterized protein (281 aa).

The protein localises to the plastid. It is found in the chloroplast. This is an uncharacterized protein from Euglena gracilis.